Here is a 110-residue protein sequence, read N- to C-terminus: Large ribosomal subunit protein uL22 (110 aa).

It belongs to the universal ribosomal protein uL22 family. As to quaternary structure, part of the 50S ribosomal subunit.

In terms of biological role, this protein binds specifically to 23S rRNA; its binding is stimulated by other ribosomal proteins, e.g. L4, L17, and L20. It is important during the early stages of 50S assembly. It makes multiple contacts with different domains of the 23S rRNA in the assembled 50S subunit and ribosome. Its function is as follows. The globular domain of the protein is located near the polypeptide exit tunnel on the outside of the subunit, while an extended beta-hairpin is found that lines the wall of the exit tunnel in the center of the 70S ribosome. In Aliarcobacter butzleri (strain RM4018) (Arcobacter butzleri), this protein is Large ribosomal subunit protein uL22.